The chain runs to 427 residues: MNADVFEAVCAMGDAARTAQSQLAQANTEAKNQLLNAIADALDQHADDIAAANTLDMNKAETDGMDAGKLDRLKFDQQRITAAAQGVRHVASLPDPIGEIVRGYHLENGLRLQQVRVPIGVLGMIYEARPNVTVDVASLCIKSGNAVLLRGGHAAEHTNAATLAVIADVLTKHGYDHNMIATVDQYGRDGATAMMEARGHIDVLIPRGGAGLIQAVVRNSKVPVIETGAGNVHIYVDRTGNPDKAIPILINAKTQRVGVCNATEKLLVHKDIAESFLPKAAAALAAAGVEMHADERAYGIIEHAGIANAQLVHATDEDWDTEYLALKIGIKVVDSLDEAIAHINRHSTGHTESIIAEDYSAIEEFTARIDSAVVMVNASTRFTDGGVFGFGAELGISTQKMHARGPMGLHEMTTTKWIGYGTGQVRE.

Belongs to the gamma-glutamyl phosphate reductase family.

Its subcellular location is the cytoplasm. The enzyme catalyses L-glutamate 5-semialdehyde + phosphate + NADP(+) = L-glutamyl 5-phosphate + NADPH + H(+). The protein operates within amino-acid biosynthesis; L-proline biosynthesis; L-glutamate 5-semialdehyde from L-glutamate: step 2/2. Functionally, catalyzes the NADPH-dependent reduction of L-glutamate 5-phosphate into L-glutamate 5-semialdehyde and phosphate. The product spontaneously undergoes cyclization to form 1-pyrroline-5-carboxylate. The polypeptide is Gamma-glutamyl phosphate reductase (Bifidobacterium adolescentis (strain ATCC 15703 / DSM 20083 / NCTC 11814 / E194a)).